Reading from the N-terminus, the 204-residue chain is Transcriptional regulator GfcR 1 (204 aa).

This sequence belongs to the purine/pyrimidine phosphoribosyltransferase family. GfcR subfamily.

The chain is Transcriptional regulator GfcR 1 from Methanosarcina barkeri (strain Fusaro / DSM 804).